Consider the following 377-residue polypeptide: Probable multidrug ABC transporter permease YbhS (377 aa).

Residues 1 to 28 are Cytoplasmic-facing; that stretch reads MSNPILSWRRVRALCVKETRQIVRDPSS. Residues 29–49 traverse the membrane as a helical segment; the sequence is WLIAVVIPLLLLFIFGYGINL. Residues 50–181 lie on the Periplasmic side of the membrane; that stretch reads DSSKLRVGIL…WFNPAAISQH (132 aa). The ABC transmembrane type-2 domain maps to 145–375; the sequence is IWQIWQMQRA…GLTWLKTKRR (231 aa). The helical transmembrane segment at 182-202 threads the bilayer; sequence FIIPGAVTIIMTVIGAILTSL. At 203–234 the chain is on the cytoplasmic side; that stretch reads VVAREWERGTMEALLSTEITRTELLLCKLIPY. The helical transmembrane segment at 235 to 255 threads the bilayer; it reads YFLGMLAMLLCMLVSVFILGV. The Periplasmic segment spans residues 256-261; it reads PYRGSL. Residues 262 to 282 traverse the membrane as a helical segment; sequence LILFFISSLFLLSTLGMGLLI. Residues 283–291 lie on the Cytoplasmic side of the membrane; it reads STITRNQFN. A helical membrane pass occupies residues 292–312; that stretch reads AAQVALNAAFLPSIMLSGFIF. The Periplasmic portion of the chain corresponds to 313–345; it reads QIDSMPAVIRAVTYIIPARYFVSTLQSLFLAGN. Residues 346 to 366 traverse the membrane as a helical segment; that stretch reads IPVVLVVNVLFLIASAVMFIG. The Cytoplasmic portion of the chain corresponds to 367–377; it reads LTWLKTKRRLD.

The protein belongs to the ABC-2 integral membrane protein family. In terms of assembly, the complex is probably composed of two ATP-binding proteins (YbhF) and two transmembrane proteins (YbhR and YbhS).

The protein resides in the cell inner membrane. Functionally, part of the ABC transporter complex YbhFSR that could be involved in efflux of cefoperazone. Probably involved in the translocation of the substrate across the membrane. In Escherichia coli O157:H7, this protein is Probable multidrug ABC transporter permease YbhS (ybhS).